Reading from the N-terminus, the 418-residue chain is Methionine aminopeptidase 2 (418 aa).

The disordered stretch occupies residues 18-49 (VSEPAAVDDSEVTEDATVQDKKKKKKKKKKKG). Basic residues predominate over residues 38–49 (KKKKKKKKKKKG). A substrate-binding site is contributed by H172. The a divalent metal cation site is built by D192, D203, and H272. H280 lines the substrate pocket. Residues E305 and E399 each coordinate a divalent metal cation.

Belongs to the peptidase M24A family. Methionine aminopeptidase eukaryotic type 2 subfamily. The cofactor is Co(2+). Requires Zn(2+) as cofactor. Mn(2+) is required as a cofactor. Fe(2+) serves as cofactor.

It localises to the cytoplasm. The enzyme catalyses Release of N-terminal amino acids, preferentially methionine, from peptides and arylamides.. In terms of biological role, cotranslationally removes the N-terminal methionine from nascent proteins. The N-terminal methionine is often cleaved when the second residue in the primary sequence is small and uncharged (Met-Ala-, Cys, Gly, Pro, Ser, Thr, or Val). This chain is Methionine aminopeptidase 2, found in Kluyveromyces lactis (strain ATCC 8585 / CBS 2359 / DSM 70799 / NBRC 1267 / NRRL Y-1140 / WM37) (Yeast).